Reading from the N-terminus, the 694-residue chain is Putative bifunctional polynucleotide kinase/RNA ligase (694 aa).

Positions 1 to 385 (MLHVSRLLAN…TKQALNNKLA (385 aa)) are ligase domain. The segment at 394–694 (KQLLVLIGIS…FNVCRDYLEF (301 aa)) is bifunctional 5'-OH polynucleotide kinase/polynucleotide 3'-phosphatase. An ATP-binding site is contributed by 401–408 (GISGSGKS).

It carries out the reaction a 5'-end dephospho-2'-deoxyribonucleoside-DNA + ATP = a 5'-end 5'-phospho-2'-deoxyribonucleoside-DNA + ADP + H(+). The catalysed reaction is ATP + (ribonucleotide)n-3'-hydroxyl + 5'-phospho-(ribonucleotide)m = (ribonucleotide)n+m + AMP + diphosphate.. Functionally, trifunctional enzyme that possesses a bifunctional polynucleotide kinase/phosphatase activity and an ATP-dependent RNA ligase activity. May therefore play a role to evade an RNA damage-based host response. This chain is Putative bifunctional polynucleotide kinase/RNA ligase (PNK/PNL), found in Autographa californica nuclear polyhedrosis virus (AcMNPV).